Reading from the N-terminus, the 124-residue chain is MRYRAVFPMLIIVFALSGCTLSTINPMKKSRIDNIHHTQILFFSDENQIDQEAPYYDALLDLEKDYPEQIDKMKVYDKKEGWEDEIETVPTLMVVDQRHVVVKIEGCVKKKEDIIKPLQHVLSK.

Positions 1–18 are cleaved as a signal peptide; it reads MRYRAVFPMLIIVFALSG. C19 carries N-palmitoyl cysteine lipidation. A lipid anchor (S-diacylglycerol cysteine) is attached at C19.

Its subcellular location is the cell membrane. In Bacillus subtilis (strain 168), this protein is Pal-related lipoprotein (slp).